A 108-amino-acid polypeptide reads, in one-letter code: Synaptic plasticity regulator PANTS (108 aa).

The interval 58-108 (KNHSTQAKDSLQESERKRLADQRKFTPVWELRQKPPSDWHLPLNQGEPQDP) is disordered. The segment covering 67 to 81 (SLQESERKRLADQRK) has biased composition (basic and acidic residues).

The protein belongs to the UPF0545 family. Rapidly degraded by proteolysis following neuronal stimulation, resulting in increased AMPA receptor clustering.

The protein localises to the synapse. It localises to the synaptic cleft. Negatively regulates long-term potentiation and modulates adult synaptic plasticity. In Danio rerio (Zebrafish), this protein is Synaptic plasticity regulator PANTS.